A 431-amino-acid chain; its full sequence is Adenylosuccinate synthetase (431 aa).

GTP-binding positions include Gly-13 to Lys-19 and Gly-41 to Thr-43. Asp-14 acts as the Proton acceptor in catalysis. Mg(2+)-binding residues include Asp-14 and Gly-41. IMP contacts are provided by residues Asp-14 to Lys-17, Asn-39 to His-42, Thr-130, Arg-144, Gln-225, Thr-240, and Arg-304. His-42 acts as the Proton donor in catalysis. Ala-300–Arg-306 contributes to the substrate binding site. GTP-binding positions include Arg-306, Lys-332–Asp-334, and Ser-415–Gly-417.

This sequence belongs to the adenylosuccinate synthetase family. Homodimer. It depends on Mg(2+) as a cofactor.

Its subcellular location is the cytoplasm. It carries out the reaction IMP + L-aspartate + GTP = N(6)-(1,2-dicarboxyethyl)-AMP + GDP + phosphate + 2 H(+). The protein operates within purine metabolism; AMP biosynthesis via de novo pathway; AMP from IMP: step 1/2. In terms of biological role, plays an important role in the de novo pathway of purine nucleotide biosynthesis. Catalyzes the first committed step in the biosynthesis of AMP from IMP. The polypeptide is Adenylosuccinate synthetase (Shewanella piezotolerans (strain WP3 / JCM 13877)).